The chain runs to 79 residues: Small ribosomal subunit protein uS17 (79 aa).

The protein belongs to the universal ribosomal protein uS17 family. Part of the 30S ribosomal subunit.

One of the primary rRNA binding proteins, it binds specifically to the 5'-end of 16S ribosomal RNA. The chain is Small ribosomal subunit protein uS17 from Rhizobium johnstonii (strain DSM 114642 / LMG 32736 / 3841) (Rhizobium leguminosarum bv. viciae).